A 358-amino-acid chain; its full sequence is MSTQNTNAQNLSFVLEGIHRVKFEDRPIPEINNPHDVLVNVRFTGICGSDVHYWEHGSIGQFIVKDPMVLGHESSGVVSKVGSAVTSLKVGDCVAMEPGIPCRRCEPCKAGKYNLCVKMAFAATPPYDGTLAKYYVLPEDFCYKLPESITLQEGAIMEPLSVAVHIVKQAGINPGQSVVVFGAGPVGLLCCAVAKAYGASKVIAVDIQKGRLDFAKKYAATATFEPAKAAALENAQRIITENDLGSGADVAIDASGAEPSVHTGIHVLRAGGTYVQGGMGRSEITFPIMAACTKELNVKGSFRYGSGDYKLAVSLVSAGKVNVKELITGVVKFEDAERAFEEVRAGKGIKTLIAGVDS.

Residues cysteine 47, histidine 72, and glutamate 73 each contribute to the Zn(2+) site. 182–187 (GAGPVG) is an NAD(+) binding site.

Belongs to the zinc-containing alcohol dehydrogenase family. Zn(2+) is required as a cofactor.

The enzyme catalyses xylitol + NAD(+) = D-xylulose + NADH + H(+). Its pathway is carbohydrate degradation; L-arabinose degradation via L-arabinitol; D-xylulose 5-phosphate from L-arabinose (fungal route): step 4/5. Functionally, xylitol dehydrogenase which catalyzes the conversion of xylitol to D-xylulose. Xylose is a major component of hemicelluloses such as xylan. Most fungi utilize D-xylose via three enzymatic reactions, xylose reductase (XR), xylitol dehydrogenase (XDH), and xylulokinase, to form xylulose 5-phosphate, which enters pentose phosphate pathway. The polypeptide is Probable D-xylulose reductase A (xdhA) (Aspergillus niger (strain ATCC MYA-4892 / CBS 513.88 / FGSC A1513)).